The following is a 217-amino-acid chain: Urease accessory protein UreG (217 aa).

13–20 serves as a coordination point for GTP; the sequence is GPVGSGKT.

Belongs to the SIMIBI class G3E GTPase family. UreG subfamily. As to quaternary structure, homodimer. UreD, UreF and UreG form a complex that acts as a GTP-hydrolysis-dependent molecular chaperone, activating the urease apoprotein by helping to assemble the nickel containing metallocenter of UreC. The UreE protein probably delivers the nickel.

The protein resides in the cytoplasm. Facilitates the functional incorporation of the urease nickel metallocenter. This process requires GTP hydrolysis, probably effectuated by UreG. The chain is Urease accessory protein UreG from Frankia alni (strain DSM 45986 / CECT 9034 / ACN14a).